The following is a 213-amino-acid chain: FMN-dependent NADH:quinone oxidoreductase 1 (213 aa).

Residue 18 to 20 (SVS) coordinates FMN.

It belongs to the azoreductase type 1 family. In terms of assembly, homodimer. FMN is required as a cofactor.

The enzyme catalyses 2 a quinone + NADH + H(+) = 2 a 1,4-benzosemiquinone + NAD(+). It catalyses the reaction N,N-dimethyl-1,4-phenylenediamine + anthranilate + 2 NAD(+) = 2-(4-dimethylaminophenyl)diazenylbenzoate + 2 NADH + 2 H(+). In terms of biological role, quinone reductase that provides resistance to thiol-specific stress caused by electrophilic quinones. Functionally, also exhibits azoreductase activity. Catalyzes the reductive cleavage of the azo bond in aromatic azo compounds to the corresponding amines. The protein is FMN-dependent NADH:quinone oxidoreductase 1 of Bacillus cereus (strain ZK / E33L).